A 290-amino-acid chain; its full sequence is MERGPVVGAGLGARARIRTLLGCLVKVLLWVASALLYFGSEQAARLLGSPCLRRLYHAWLAAVVIFGPLLQFHVNPRTIFASHGNFFNIKFVNSAWGWTCTFLGGFVLLVVFLATRRVAVTARHLSRLVVGAAVWRGAGRAFLLIEDLTGSCFEPLPQGLLLHELPDRRSRLAAGHQWRGYTVSSHTFLLTFCCLLMAEEAAVFAKYLAHGLPAGAPLRLVFLLNVLLLGLWNFLLLCTVIYFHQYTHKVVGAAVGTFAWYLTYGSWYHQPWSPGSPGHGLFTHPSRKHN.

At 1–18 (MERGPVVGAGLGARARIR) the chain is on the lumenal side. A helical transmembrane segment spans residues 19–39 (TLLGCLVKVLLWVASALLYFG). The Cytoplasmic portion of the chain corresponds to 40–54 (SEQAARLLGSPCLRR). Residues 55–75 (LYHAWLAAVVIFGPLLQFHVN) form a helical membrane-spanning segment. The Lumenal segment spans residues 76–94 (PRTIFASHGNFFNIKFVNS). The chain crosses the membrane as a helical span at residues 95–115 (AWGWTCTFLGGFVLLVVFLAT). Residues 116–141 (RRVAVTARHLSRLVVGAAVWRGAGRA) are Cytoplasmic-facing. A helical membrane pass occupies residues 142 to 162 (FLLIEDLTGSCFEPLPQGLLL). Topologically, residues 163-187 (HELPDRRSRLAAGHQWRGYTVSSHT) are lumenal. H186 is a catalytic residue. Residues 188-208 (FLLTFCCLLMAEEAAVFAKYL) form a helical membrane-spanning segment. Residues 209–220 (AHGLPAGAPLRL) lie on the Cytoplasmic side of the membrane. Residues 221–241 (VFLLNVLLLGLWNFLLLCTVI) form a helical membrane-spanning segment. Over 242-249 (YFHQYTHK) the chain is Lumenal. H244 is an active-site residue. The helical transmembrane segment at 250-270 (VVGAAVGTFAWYLTYGSWYHQ) threads the bilayer. At 271-290 (PWSPGSPGHGLFTHPSRKHN) the chain is on the cytoplasmic side.

The protein belongs to the FIT family. FIT1 subfamily.

It is found in the endoplasmic reticulum membrane. Functionally, plays an important role in the formation of lipid droplets (LDs) which are storage organelles at the center of lipid and energy homeostasis. Directly binds to diacylglycerol (DAGs) and triacylglycerol. The chain is Fat storage-inducing transmembrane protein 1 from Sus scrofa (Pig).